A 587-amino-acid chain; its full sequence is Inorganic phosphate transporter 2-1, chloroplastic (587 aa).

Residues 1-71 (MTLPYRFSSV…VCPLASFSSY (71 aa)) constitute a chloroplast transit peptide. The tract at residues 74-106 (SEGEEQHHADQPIQNPHESSTVSNESDGKGNAE) is disordered. A compositionally biased stretch (polar residues) spans 85–98 (PIQNPHESSTVSNE). Transmembrane regions (helical) follow at residues 127-147 (AISI…KSLG), 154-174 (TKLL…NIGA), 195-215 (AVMT…THVT), 233-253 (MLLF…LQVA), 265-285 (CIVG…AVFW), 289-309 (AKVA…SFLV), 327-347 (AAAA…SAAL), 352-372 (IFPI…IVFD), 413-433 (LEIV…FMSF), 465-485 (IVIP…GLTM), 523-543 (LGLP…VGFA), and 559-579 (ASWL…TWIF).

Belongs to the inorganic phosphate transporter (PiT) (TC 2.A.20.2) family. As to expression, mostly expressed in young green tissues. Present in both auto- and heterotrophic tissues. Also expressed in root stele.

It localises to the plastid. Its subcellular location is the chloroplast inner membrane. Its function is as follows. Low affinity H(+)/Pi chloroplastic cotransporter. Involved in inorganic phosphate (orthophosphate, Pi) uptake in green parts of plants in Pi-sufficient conditions. Required for Pi retranslocation during Pi deprivation. This chain is Inorganic phosphate transporter 2-1, chloroplastic (PHT2-1), found in Arabidopsis thaliana (Mouse-ear cress).